The sequence spans 204 residues: Large ribosomal subunit protein uL4 (204 aa).

The disordered stretch occupies residues 49–75; sequence TKGRSEVSGGGKKPWRQKGRGGARAGS.

Belongs to the universal ribosomal protein uL4 family. As to quaternary structure, part of the 50S ribosomal subunit.

One of the primary rRNA binding proteins, this protein initially binds near the 5'-end of the 23S rRNA. It is important during the early stages of 50S assembly. It makes multiple contacts with different domains of the 23S rRNA in the assembled 50S subunit and ribosome. Functionally, forms part of the polypeptide exit tunnel. This chain is Large ribosomal subunit protein uL4, found in Campylobacter hominis (strain ATCC BAA-381 / DSM 21671 / CCUG 45161 / LMG 19568 / NCTC 13146 / CH001A).